The chain runs to 413 residues: Glutamyl-tRNA reductase (413 aa).

Substrate-binding positions include 49 to 52 (TCNR), serine 105, 110 to 112 (EPQ), and glutamine 116. The active-site Nucleophile is the cysteine 50. Residue 185 to 190 (GAGETI) participates in NADP(+) binding.

The protein belongs to the glutamyl-tRNA reductase family. Homodimer.

The enzyme catalyses (S)-4-amino-5-oxopentanoate + tRNA(Glu) + NADP(+) = L-glutamyl-tRNA(Glu) + NADPH + H(+). It participates in porphyrin-containing compound metabolism; protoporphyrin-IX biosynthesis; 5-aminolevulinate from L-glutamyl-tRNA(Glu): step 1/2. Functionally, catalyzes the NADPH-dependent reduction of glutamyl-tRNA(Glu) to glutamate 1-semialdehyde (GSA). In Coxiella burnetii (strain Dugway 5J108-111), this protein is Glutamyl-tRNA reductase.